A 188-amino-acid polypeptide reads, in one-letter code: Small ribosomal subunit protein eS8 (188 aa).

The segment at Met1–Ser34 is disordered. A compositionally biased stretch (basic residues) spans Ser7 to Lys26.

It belongs to the eukaryotic ribosomal protein eS8 family.

This chain is Small ribosomal subunit protein eS8 (RPS8), found in Theileria parva (East coast fever infection agent).